The chain runs to 483 residues: tRNA-2-methylthio-N(6)-dimethylallyladenosine synthase (483 aa).

Residues 31–148 (KKLYIETQGC…LPQMLDQHHA (118 aa)) enclose the MTTase N-terminal domain. Residues Cys40, Cys77, Cys111, Cys192, Cys196, and Cys199 each contribute to the [4Fe-4S] cluster site. In terms of domain architecture, Radical SAM core spans 178 to 410 (RVEGFKAFVS…QQVIKQSSIE (233 aa)). One can recognise a TRAM domain in the interval 413-477 (DAMLGKIERV…LNLVYGELLN (65 aa)).

Belongs to the methylthiotransferase family. MiaB subfamily. In terms of assembly, monomer. [4Fe-4S] cluster is required as a cofactor.

Its subcellular location is the cytoplasm. The enzyme catalyses N(6)-dimethylallyladenosine(37) in tRNA + (sulfur carrier)-SH + AH2 + 2 S-adenosyl-L-methionine = 2-methylsulfanyl-N(6)-dimethylallyladenosine(37) in tRNA + (sulfur carrier)-H + 5'-deoxyadenosine + L-methionine + A + S-adenosyl-L-homocysteine + 2 H(+). In terms of biological role, catalyzes the methylthiolation of N6-(dimethylallyl)adenosine (i(6)A), leading to the formation of 2-methylthio-N6-(dimethylallyl)adenosine (ms(2)i(6)A) at position 37 in tRNAs that read codons beginning with uridine. The protein is tRNA-2-methylthio-N(6)-dimethylallyladenosine synthase of Acinetobacter baumannii (strain AB0057).